A 227-amino-acid polypeptide reads, in one-letter code: MGASARLLRAVIMGAPGSGKGTVSSRITTHFELKHLSSGDLLRDNMLRGTEIGVLAKAFIDQGKLIPDDVMTRLALHELKNLTQYSWLLDGFPRTLPQAEALDRAYQIDTVINLNVPFEVIKQRLTARWIHPASGRVYNIEFNPPKTVGIDDLTGEPLIQREDDKPETVIKRLKAYEDQTKPVLEYYQKKGVLETFSGTETNKVWPYVYAFLQTKVPQTSQKASVTP.

The GTP site is built by Gly17, Gly19, Lys20, Gly21, and Thr22. Lys20 carries the N6-succinyllysine modification. The residue at position 34 (Lys34) is an N6-acetyllysine. Ser37 is subject to Phosphoserine. Residues 37–66 (SSGDLLRDNMLRGTEIGVLAKAFIDQGKLI) are NMP. AMP-binding residues include Ser38 and Arg43. Lys57 bears the N6-succinyllysine mark. Lys64 provides a ligand contact to AMP. An N6-acetyllysine; alternate mark is found at Lys64 and Lys80. 2 positions are modified to N6-succinyllysine; alternate: Lys64 and Lys80. Residues Gly91, Arg94, and Gln98 each contribute to the AMP site. The segment at 127 to 164 (ARWIHPASGRVYNIEFNPPKTVGIDDLTGEPLIQREDD) is LID. 5 residues coordinate GTP: Arg128, Tyr138, Asn139, Arg161, and Arg172. 2 positions are modified to N6-acetyllysine; alternate: Lys174 and Lys189. Lys174 and Lys189 each carry N6-succinyllysine; alternate. Thr201 lines the GTP pocket. N6-acetyllysine is present on Lys203.

Belongs to the adenylate kinase family. AK3 subfamily. As to quaternary structure, monomer.

It localises to the mitochondrion matrix. The enzyme catalyses a ribonucleoside 5'-triphosphate + AMP = a ribonucleoside 5'-diphosphate + ADP. The catalysed reaction is GTP + AMP = GDP + ADP. It catalyses the reaction ITP + AMP = IDP + ADP. Mitochondrial adenylate kinase with a specific GTP:AMP phosphotransferase activity. Could also use ITP as phosphate donor. Its physiological function is to recycle GTP into GDP which is necessary for the TCA cycle in the mitochondrial matrix. This Pongo abelii (Sumatran orangutan) protein is GTP:AMP phosphotransferase AK3, mitochondrial.